A 352-amino-acid polypeptide reads, in one-letter code: MSQKILFIDRDGTLIEEPKSDFQIDTLEKLRFEKDAIPTLLKLKNFGFKFIMVSNQDGLGTPSFPKENFEIAHEKMLDILKSCGIEFQDIFICPHFENENCACRKPKTAMLEEYIKHELYDKEQSFVIGDRESDMILASNLGVRGLRYGELSWKEIENEILSSFRSASYQRTTKETDIKVKVCLNGGKVSIKTGIDFFDHMLEQIAVHGGIGLEISCKGDLEIDEHHSVEDVALALGACIKKALGDKIGIARYGFALPMDECLASCAMDFCNRPHLVYKAKFKKSHLGALSTEMIEHFFYSLSYAMGVSLHLKVKGKNDHHKAEGLFKAFAKALKMAVKIESENLASSKGVI.

Residues 1–164 (MSQKILFIDR…EIENEILSSF (164 aa)) form a histidinol-phosphatase region. D9 acts as the Nucleophile in catalysis. Mg(2+) contacts are provided by D9 and D11. Residue D11 is the Proton donor of the active site. Residues C93, H95, C101, and C103 each coordinate Zn(2+). A Mg(2+)-binding site is contributed by D130. The interval 165–352 (RSASYQRTTK…ENLASSKGVI (188 aa)) is imidazoleglycerol-phosphate dehydratase.

It in the N-terminal section; belongs to the histidinol-phosphatase family. This sequence in the C-terminal section; belongs to the imidazoleglycerol-phosphate dehydratase family. Requires Mg(2+) as cofactor. It depends on Zn(2+) as a cofactor.

The protein resides in the cytoplasm. It catalyses the reaction D-erythro-1-(imidazol-4-yl)glycerol 3-phosphate = 3-(imidazol-4-yl)-2-oxopropyl phosphate + H2O. The catalysed reaction is L-histidinol phosphate + H2O = L-histidinol + phosphate. The protein operates within amino-acid biosynthesis; L-histidine biosynthesis; L-histidine from 5-phospho-alpha-D-ribose 1-diphosphate: step 6/9. It participates in amino-acid biosynthesis; L-histidine biosynthesis; L-histidine from 5-phospho-alpha-D-ribose 1-diphosphate: step 8/9. In Campylobacter jejuni subsp. jejuni serotype O:6 (strain 81116 / NCTC 11828), this protein is Histidine biosynthesis bifunctional protein HisB.